Consider the following 232-residue polypeptide: SRMSDPKMIKEIIDAVSIPVMAKVRIGHVVEAQILQAIGIDYIDESEVLTPADDLFHINKKEFNVPFVCGARNLGEALRRIGEGACMIRTKGEAGTGNVIEAVRHMRTIQSQIRKLKVMPKEELMIAAKELGAPYDLVEYVRENGKLPVINFAAGGIATPADAALMMQLGCDGVFVGSGIFKSENPAKRAKAIVEAVKNYNNPLKIAEVSEGLGEAMTGLEIDKLDVTFAER.

Lysine 23 functions as the Schiff-base intermediate with D-ribose 5-phosphate in the catalytic mechanism. Glycine 95 serves as a coordination point for D-ribose 5-phosphate. Arginine 107 is a binding site for D-glyceraldehyde 3-phosphate. D-ribose 5-phosphate contacts are provided by residues glycine 156 and 177 to 178 (GS).

This sequence belongs to the PdxS/SNZ family. In the presence of PdxT, forms a dodecamer of heterodimers.

The catalysed reaction is aldehydo-D-ribose 5-phosphate + D-glyceraldehyde 3-phosphate + L-glutamine = pyridoxal 5'-phosphate + L-glutamate + phosphate + 3 H2O + H(+). It functions in the pathway cofactor biosynthesis; pyridoxal 5'-phosphate biosynthesis. Functionally, catalyzes the formation of pyridoxal 5'-phosphate from ribose 5-phosphate (RBP), glyceraldehyde 3-phosphate (G3P) and ammonia. The ammonia is provided by the PdxT subunit. Can also use ribulose 5-phosphate and dihydroxyacetone phosphate as substrates, resulting from enzyme-catalyzed isomerization of RBP and G3P, respectively. This is Pyridoxal 5'-phosphate synthase subunit PdxS from Clostridium novyi.